The chain runs to 1066 residues: Beta-galactosidase (1066 aa).

The substrate site is built by Asn-110 and Asp-209. Position 209 (Asp-209) interacts with Na(+). Glu-432, His-434, and Glu-477 together coordinate Mg(2+). Residues Glu-477 and Glu-553–His-556 each bind substrate. Glu-477 (proton donor) is an active-site residue. The active-site Nucleophile is Glu-553. Asn-613 lines the Mg(2+) pocket. Na(+) is bound by residues Phe-617 and Asn-620. Substrate-binding residues include Asn-620 and Trp-1041.

Belongs to the glycosyl hydrolase 2 family. In terms of assembly, homotetramer. Mg(2+) serves as cofactor. Requires Na(+) as cofactor.

It carries out the reaction Hydrolysis of terminal non-reducing beta-D-galactose residues in beta-D-galactosides.. In Yersinia pseudotuberculosis serotype IB (strain PB1/+), this protein is Beta-galactosidase.